The primary structure comprises 460 residues: Putative glycoside/cation symporter YagG (460 aa).

The Cytoplasmic segment spans residues 1–9 (MTQLTMKDK). The next 2 membrane-spanning stretches (helical) occupy residues 10 to 30 (IGYG…MFLL) and 31 to 51 (AYFY…LFLV). Over 52–78 (SRVLDAVTDPLMGLLVDRTRTRHGQFR) the chain is Cytoplasmic. A helical transmembrane segment spans residues 79 to 99 (PFLLWGAIPFGIVCVLTFYTP). Residues 100–106 (DFSAQGK) are Periplasmic-facing. The chain crosses the membrane as a helical span at residues 107–127 (IIYACVTYILLTLVYTFVNVP). The Cytoplasmic segment spans residues 128–150 (YCAMPGVITADPKERHALQSWRF). The helical transmembrane segment at 151–171 (FLAAAGSLAISGIALPLVSII) threads the bilayer. Topologically, residues 172-179 (GKGDEQVG) are periplasmic. Residues 180–200 (YFGAMCVLGLSGVVLLYVCFF) form a helical membrane-spanning segment. Topologically, residues 201-262 (TTKERYTFEV…FVKYVMDHPE (62 aa)) are cytoplasmic. A helical transmembrane segment spans residues 263–283 (LATQFLLYGSLATMFGSLCSS). The Periplasmic portion of the chain corresponds to 284–308 (RLLGRFDRVTAFKWIIVAYSLISLL). The chain crosses the membrane as a helical span at residues 309 to 329 (IFVTPAEHIALIFALNILFLF). Residues 330–366 (VFNTTTPLQWLMASDVVDYEESRSGRRLDGLVFSTYL) are Cytoplasmic-facing. The helical transmembrane segment at 367–387 (FSLKIGLAIGGAVVGWILAYV) threads the bilayer. Residues 388 to 405 (NYSASSSVQPVEVLTTIK) are Periplasmic-facing. A helical membrane pass occupies residues 406-426 (ILFCVVPVVLYAGMFIMLSLY). Residues 427-460 (KLTDARVEAISRQLIKHRAAQGEAVPDAATAASH) are Cytoplasmic-facing.

Belongs to the sodium:galactoside symporter (TC 2.A.2) family.

It is found in the cell inner membrane. The chain is Putative glycoside/cation symporter YagG (yagG) from Escherichia coli (strain K12).